A 395-amino-acid polypeptide reads, in one-letter code: Elongation factor Tu (395 aa).

The region spanning 10–204 (KPHVNIGTIG…AVDNYIPHPV (195 aa)) is the tr-type G domain. The G1 stretch occupies residues 19 to 26 (GHVDHGKT). Position 19–26 (19–26 (GHVDHGKT)) interacts with GTP. Residue Thr26 participates in Mg(2+) binding. The G2 stretch occupies residues 60–64 (GITIS). The G3 stretch occupies residues 81–84 (DCPG). Residues 81-85 (DCPGH) and 136-139 (NKVD) each bind GTP. Residues 136-139 (NKVD) are G4. Positions 174-176 (SAL) are G5.

It belongs to the TRAFAC class translation factor GTPase superfamily. Classic translation factor GTPase family. EF-Tu/EF-1A subfamily. Monomer.

The protein localises to the cytoplasm. The catalysed reaction is GTP + H2O = GDP + phosphate + H(+). GTP hydrolase that promotes the GTP-dependent binding of aminoacyl-tRNA to the A-site of ribosomes during protein biosynthesis. The protein is Elongation factor Tu of Rickettsia akari (strain Hartford).